Here is a 287-residue protein sequence, read N- to C-terminus: MDKIKIALQYMMPKHLISRLVGKLAAAELGSITTAAIKWFIKQYKIDMSEAAQSEPEAYTTFNNFFTRALKPGIRPLFDDKDYIVHPVDGAISQCGPIKGDQIFQAKGHEYSSLALLGNQADDAKRFEDGDFATIYLAPKDYHRIHMPIKGTLSKMTYVPGDLFSVNPLTAENVPGLFARNERVVALFETEIGPMAMVLVGATIVASIETVWAGTVTPPAGKKVFTWDYPTEGPDVITLDKGDEMGRFKLGSTVVMLFAKDALDEFAKDVVPKAVTRMGQPFAKIED.

Active-site charge relay system; for autoendoproteolytic cleavage activity residues include D89, H146, and S252. Catalysis depends on S252, which acts as the Schiff-base intermediate with substrate; via pyruvic acid; for decarboxylase activity. S252 is subject to Pyruvic acid (Ser); by autocatalysis.

It belongs to the phosphatidylserine decarboxylase family. PSD-B subfamily. Prokaryotic type I sub-subfamily. In terms of assembly, heterodimer of a large membrane-associated beta subunit and a small pyruvoyl-containing alpha subunit. The cofactor is pyruvate. Is synthesized initially as an inactive proenzyme. Formation of the active enzyme involves a self-maturation process in which the active site pyruvoyl group is generated from an internal serine residue via an autocatalytic post-translational modification. Two non-identical subunits are generated from the proenzyme in this reaction, and the pyruvate is formed at the N-terminus of the alpha chain, which is derived from the carboxyl end of the proenzyme. The autoendoproteolytic cleavage occurs by a canonical serine protease mechanism, in which the side chain hydroxyl group of the serine supplies its oxygen atom to form the C-terminus of the beta chain, while the remainder of the serine residue undergoes an oxidative deamination to produce ammonia and the pyruvoyl prosthetic group on the alpha chain. During this reaction, the Ser that is part of the protease active site of the proenzyme becomes the pyruvoyl prosthetic group, which constitutes an essential element of the active site of the mature decarboxylase.

Its subcellular location is the cell membrane. It catalyses the reaction a 1,2-diacyl-sn-glycero-3-phospho-L-serine + H(+) = a 1,2-diacyl-sn-glycero-3-phosphoethanolamine + CO2. The protein operates within phospholipid metabolism; phosphatidylethanolamine biosynthesis; phosphatidylethanolamine from CDP-diacylglycerol: step 2/2. Its function is as follows. Catalyzes the formation of phosphatidylethanolamine (PtdEtn) from phosphatidylserine (PtdSer). In Shewanella sediminis (strain HAW-EB3), this protein is Phosphatidylserine decarboxylase proenzyme.